The sequence spans 129 residues: Phosphoribosyl-AMP cyclohydrolase (129 aa).

Asp77 lines the Mg(2+) pocket. Zn(2+) is bound at residue Cys78. Positions 79 and 81 each coordinate Mg(2+). The Zn(2+) site is built by Cys94 and Cys101.

This sequence belongs to the PRA-CH family. In terms of assembly, homodimer. Mg(2+) serves as cofactor. It depends on Zn(2+) as a cofactor.

It is found in the cytoplasm. It carries out the reaction 1-(5-phospho-beta-D-ribosyl)-5'-AMP + H2O = 1-(5-phospho-beta-D-ribosyl)-5-[(5-phospho-beta-D-ribosylamino)methylideneamino]imidazole-4-carboxamide. Its pathway is amino-acid biosynthesis; L-histidine biosynthesis; L-histidine from 5-phospho-alpha-D-ribose 1-diphosphate: step 3/9. Functionally, catalyzes the hydrolysis of the adenine ring of phosphoribosyl-AMP. This is Phosphoribosyl-AMP cyclohydrolase from Pelotomaculum thermopropionicum (strain DSM 13744 / JCM 10971 / SI).